A 691-amino-acid polypeptide reads, in one-letter code: Elongation factor G (691 aa).

Residues 8–282 (ERVRNIGIAA…AVVDYLPAPV (275 aa)) enclose the tr-type G domain. Residues 17-24 (AHIDAGKT), 81-85 (DTPGH), and 135-138 (NKMD) each bind GTP.

The protein belongs to the TRAFAC class translation factor GTPase superfamily. Classic translation factor GTPase family. EF-G/EF-2 subfamily.

It localises to the cytoplasm. Catalyzes the GTP-dependent ribosomal translocation step during translation elongation. During this step, the ribosome changes from the pre-translocational (PRE) to the post-translocational (POST) state as the newly formed A-site-bound peptidyl-tRNA and P-site-bound deacylated tRNA move to the P and E sites, respectively. Catalyzes the coordinated movement of the two tRNA molecules, the mRNA and conformational changes in the ribosome. This Prochlorococcus marinus (strain MIT 9303) protein is Elongation factor G.